The chain runs to 215 residues: Peptide methionine sulfoxide reductase MsrA (215 aa).

Cys57 is an active-site residue.

This sequence belongs to the MsrA Met sulfoxide reductase family.

The enzyme catalyses L-methionyl-[protein] + [thioredoxin]-disulfide + H2O = L-methionyl-(S)-S-oxide-[protein] + [thioredoxin]-dithiol. The catalysed reaction is [thioredoxin]-disulfide + L-methionine + H2O = L-methionine (S)-S-oxide + [thioredoxin]-dithiol. In terms of biological role, has an important function as a repair enzyme for proteins that have been inactivated by oxidation. Catalyzes the reversible oxidation-reduction of methionine sulfoxide in proteins to methionine. The chain is Peptide methionine sulfoxide reductase MsrA from Saccharophagus degradans (strain 2-40 / ATCC 43961 / DSM 17024).